The primary structure comprises 189 residues: Large ribosomal subunit protein bL9 (189 aa).

The protein belongs to the bacterial ribosomal protein bL9 family.

Binds to the 23S rRNA. This Brucella melitensis biotype 2 (strain ATCC 23457) protein is Large ribosomal subunit protein bL9.